The sequence spans 588 residues: Pleckstrin homology domain-containing family A member 4 (588 aa).

In terms of domain architecture, PH spans 54–153 (PVHIRGWLHK…WLRALGRASR (100 aa)). Disordered stretches follow at residues 155-349 (EGED…QASM) and 495-588 (AGLG…VDHL). Serine 164 carries the post-translational modification Phosphoserine. The span at 183-193 (VNRREEGRISE) shows a compositional bias: basic and acidic residues. Over residues 211-222 (TPNSTVDLQTDT) the composition is skewed to polar residues. 2 stretches are compositionally biased toward low complexity: residues 246 to 260 (PRPR…PLSA) and 321 to 334 (QRTQ…GSST). Serine 562 is modified (phosphoserine).

It is found in the cytoplasm. The protein localises to the membrane. In terms of biological role, binds specifically to phosphatidylinositol 3-phosphate (PtdIns3P), but not to other phosphoinositides. The sequence is that of Pleckstrin homology domain-containing family A member 4 (Plekha4) from Mus musculus (Mouse).